The primary structure comprises 524 residues: Peptide chain release factor 3 (524 aa).

The 268-residue stretch at 11 to 278 (AKRRTFAIIS…SFVQYAPEPG (268 aa)) folds into the tr-type G domain. GTP-binding positions include 20 to 27 (SHPDAGKT), 88 to 92 (DTPGH), and 142 to 145 (NKLD).

Belongs to the TRAFAC class translation factor GTPase superfamily. Classic translation factor GTPase family. PrfC subfamily.

The protein resides in the cytoplasm. Functionally, increases the formation of ribosomal termination complexes and stimulates activities of RF-1 and RF-2. It binds guanine nucleotides and has strong preference for UGA stop codons. It may interact directly with the ribosome. The stimulation of RF-1 and RF-2 is significantly reduced by GTP and GDP, but not by GMP. The chain is Peptide chain release factor 3 from Lacticaseibacillus casei (strain BL23) (Lactobacillus casei).